The primary structure comprises 156 residues: D-aminoacyl-tRNA deacylase (156 aa).

The Gly-cisPro motif, important for rejection of L-amino acids motif lies at G137–P138.

It belongs to the DTD family. Homodimer.

The protein localises to the cytoplasm. The catalysed reaction is glycyl-tRNA(Ala) + H2O = tRNA(Ala) + glycine + H(+). It carries out the reaction a D-aminoacyl-tRNA + H2O = a tRNA + a D-alpha-amino acid + H(+). An aminoacyl-tRNA editing enzyme that deacylates mischarged D-aminoacyl-tRNAs. Also deacylates mischarged glycyl-tRNA(Ala), protecting cells against glycine mischarging by AlaRS. Acts via tRNA-based rather than protein-based catalysis; rejects L-amino acids rather than detecting D-amino acids in the active site. By recycling D-aminoacyl-tRNA to D-amino acids and free tRNA molecules, this enzyme counteracts the toxicity associated with the formation of D-aminoacyl-tRNA entities in vivo and helps enforce protein L-homochirality. The sequence is that of D-aminoacyl-tRNA deacylase from Dictyoglomus turgidum (strain DSM 6724 / Z-1310).